The sequence spans 385 residues: GDP-D-glucose phosphorylase 1 (385 aa).

The Tele-GMP-histidine intermediate role is filled by His-218.

The protein belongs to the GDPGP1 family.

The protein resides in the cytoplasm. The catalysed reaction is GDP-alpha-D-glucose + phosphate = alpha-D-glucose 1-phosphate + GDP + H(+). Its function is as follows. Specific and highly efficient GDP-D-glucose phosphorylase regulating the levels of GDP-D-glucose in cells. In Bos taurus (Bovine), this protein is GDP-D-glucose phosphorylase 1 (GDPGP1).